Here is a 314-residue protein sequence, read N- to C-terminus: Malate dehydrogenase (314 aa).

Residues 11 to 16 and D35 each bind NAD(+); that span reads GSGNIG. The substrate site is built by R84 and R90. NAD(+) is bound by residues N97 and 120–122; that span reads ITN. Residues N122 and R153 each coordinate substrate. H177 functions as the Proton acceptor in the catalytic mechanism.

Belongs to the LDH/MDH superfamily. MDH type 3 family.

The enzyme catalyses (S)-malate + NAD(+) = oxaloacetate + NADH + H(+). Functionally, catalyzes the reversible oxidation of malate to oxaloacetate. This is Malate dehydrogenase from Rickettsia africae (strain ESF-5).